The sequence spans 392 residues: 3-ketoacyl-CoA thiolase (392 aa).

Cysteine 95 serves as the catalytic Acyl-thioester intermediate. Residues histidine 347 and cysteine 377 each act as proton acceptor in the active site.

The protein belongs to the thiolase-like superfamily. Thiolase family. As to quaternary structure, heterotetramer of two alpha chains (FadB) and two beta chains (FadA).

The protein resides in the cytoplasm. The enzyme catalyses an acyl-CoA + acetyl-CoA = a 3-oxoacyl-CoA + CoA. It participates in lipid metabolism; fatty acid beta-oxidation. Its function is as follows. Catalyzes the final step of fatty acid oxidation in which acetyl-CoA is released and the CoA ester of a fatty acid two carbons shorter is formed. This Chromohalobacter salexigens (strain ATCC BAA-138 / DSM 3043 / CIP 106854 / NCIMB 13768 / 1H11) protein is 3-ketoacyl-CoA thiolase.